The sequence spans 893 residues: Dolichyl-phosphate-mannose--protein mannosyltransferase 1 (893 aa).

7 helical membrane-spanning segments follow: residues 29 to 49 (FSFL…CVRA), 77 to 97 (LLMD…AALT), 124 to 144 (LFTC…VYFP), 147 to 167 (SKTA…LITM), 170 to 190 (YIMI…YWSV), 224 to 244 (AMFT…NLLG), and 258 to 278 (FSYI…VFAV). An MIR 1 domain is found at 310–364 (FADVAYGSLVTIRNAIPEHGYLHSSELLYPEGTEQQIISLVDEPNQNALWIIEHE). A glycan (N-linked (GlcNAc...) asparagine) is linked at N370. 2 consecutive MIR domains span residues 374–433 (IELL…IQIL) and 443–499 (NGTV…IESN). A glycan (N-linked (GlcNAc...) asparagine) is linked at N443. Phosphothreonine is present on T451. 3 consecutive transmembrane segments (helical) span residues 573–593 (FVWY…IFCL), 610–630 (YNYN…PYIL), and 643–663 (ALYF…NAVF). Residue N665 is glycosylated (N-linked (GlcNAc...) asparagine). A helical transmembrane segment spans residues 671 to 691 (ALSVIIMALMFLVYRLYSPFT). N720 carries N-linked (GlcNAc...) asparagine glycosylation. Positions 785–893 (KAEQEAREAA…VAESAQARVE (109 aa)) are disordered. Over residues 786–806 (AEQEAREAAEKAASEAAERSS) the composition is skewed to basic and acidic residues. 2 stretches are compositionally biased toward low complexity: residues 807 to 823 (SEAA…AASV) and 854 to 864 (MEAAALNNAAE). Over residues 868 to 878 (VVGSSPESVAS) the composition is skewed to polar residues.

It belongs to the glycosyltransferase 39 family.

It localises to the endoplasmic reticulum membrane. The protein localises to the nucleus membrane. It catalyses the reaction a di-trans,poly-cis-dolichyl beta-D-mannosyl phosphate + L-seryl-[protein] = 3-O-(alpha-D-mannosyl)-L-seryl-[protein] + a di-trans,poly-cis-dolichyl phosphate + H(+). The enzyme catalyses a di-trans,poly-cis-dolichyl beta-D-mannosyl phosphate + L-threonyl-[protein] = 3-O-(alpha-D-mannosyl)-L-threonyl-[protein] + a di-trans,poly-cis-dolichyl phosphate + H(+). Its pathway is protein modification; protein glycosylation. In terms of biological role, transfers mannose from Dol-P-mannose to Ser or Thr residues on proteins. Required for normal cell growth and septum formation. Shown to actively O-mannosylate wsc1. The sequence is that of Dolichyl-phosphate-mannose--protein mannosyltransferase 1 (ogm1) from Schizosaccharomyces pombe (strain 972 / ATCC 24843) (Fission yeast).